Reading from the N-terminus, the 293-residue chain is Mimecan (293 aa).

An N-terminal signal peptide occupies residues 1-19 (MKTLQATFFLVAFVPLVKP). Asparagine 60 carries an N-linked (GlcNAc...) asparagine glycan. 7 LRR repeats span residues 107 to 126 (EAVP…FNKI), 127 to 150 (KRIA…GNMI), 151 to 174 (EEIE…ENRL), 175 to 194 (VKLP…QNRI), 195 to 220 (KSRG…HNAL), 221 to 241 (ESVP…HNNI), and 242 to 272 (TTIT…GNPI). 2 N-linked (GlcNAc...) asparagine glycosylation sites follow: asparagine 240 and asparagine 253. Cysteine 250 and cysteine 283 are disulfide-bonded.

This sequence belongs to the small leucine-rich proteoglycan (SLRP) family. SLRP class III subfamily. In terms of processing, contains keratan sulfate. In terms of tissue distribution, expressed in many tissues.

Its subcellular location is the secreted. It localises to the extracellular space. The protein resides in the extracellular matrix. Functionally, induces bone formation in conjunction with TGF-beta-1 or TGF-beta-2. The protein is Mimecan (OGN) of Coturnix japonica (Japanese quail).